The primary structure comprises 486 residues: Cobyric acid synthase (486 aa).

The GATase cobBQ-type domain occupies 248–435 (VLNVVVPVLP…LHGLFESPAA (188 aa)). Catalysis depends on Cys329, which acts as the Nucleophile. His427 is a catalytic residue.

The protein belongs to the CobB/CobQ family. CobQ subfamily.

It functions in the pathway cofactor biosynthesis; adenosylcobalamin biosynthesis. Its function is as follows. Catalyzes amidations at positions B, D, E, and G on adenosylcobyrinic A,C-diamide. NH(2) groups are provided by glutamine, and one molecule of ATP is hydrogenolyzed for each amidation. In Pseudomonas syringae pv. tomato (strain ATCC BAA-871 / DC3000), this protein is Cobyric acid synthase.